The sequence spans 288 residues: Polyamine aminopropyltransferase (288 aa).

A PABS domain is found at 9 to 238; the sequence is ETLHDQFGQY…GIMTFAWATD (230 aa). Position 33 (Gln33) interacts with S-methyl-5'-thioadenosine. His64 and Asp88 together coordinate spermidine. S-methyl-5'-thioadenosine contacts are provided by residues Glu108 and 140–141; that span reads DG. The active-site Proton acceptor is Asp158. Residue 158–161 participates in spermidine binding; the sequence is DCTD. Position 165 (Pro165) interacts with S-methyl-5'-thioadenosine.

It belongs to the spermidine/spermine synthase family. In terms of assembly, homodimer or homotetramer.

Its subcellular location is the cytoplasm. The enzyme catalyses S-adenosyl 3-(methylsulfanyl)propylamine + putrescine = S-methyl-5'-thioadenosine + spermidine + H(+). It participates in amine and polyamine biosynthesis; spermidine biosynthesis; spermidine from putrescine: step 1/1. Functionally, catalyzes the irreversible transfer of a propylamine group from the amino donor S-adenosylmethioninamine (decarboxy-AdoMet) to putrescine (1,4-diaminobutane) to yield spermidine. This is Polyamine aminopropyltransferase from Shigella boydii serotype 18 (strain CDC 3083-94 / BS512).